Here is a 307-residue protein sequence, read N- to C-terminus: Acetyl-coenzyme A carboxylase carboxyl transferase subunit beta (307 aa).

The 270-residue stretch at 25–294 (LWIKDPESGE…TEENGSRRLP (270 aa)) folds into the CoA carboxyltransferase N-terminal domain.

This sequence belongs to the AccD/PCCB family. Acetyl-CoA carboxylase is a heterohexamer composed of biotin carboxyl carrier protein (AccB), biotin carboxylase (AccC) and two subunits each of ACCase subunit alpha (AccA) and ACCase subunit beta (AccD).

The protein resides in the cytoplasm. The enzyme catalyses N(6)-carboxybiotinyl-L-lysyl-[protein] + acetyl-CoA = N(6)-biotinyl-L-lysyl-[protein] + malonyl-CoA. It functions in the pathway lipid metabolism; malonyl-CoA biosynthesis; malonyl-CoA from acetyl-CoA: step 1/1. Functionally, component of the acetyl coenzyme A carboxylase (ACC) complex. Biotin carboxylase (BC) catalyzes the carboxylation of biotin on its carrier protein (BCCP) and then the CO(2) group is transferred by the transcarboxylase to acetyl-CoA to form malonyl-CoA. The protein is Acetyl-coenzyme A carboxylase carboxyl transferase subunit beta of Chelativorans sp. (strain BNC1).